Reading from the N-terminus, the 383-residue chain is uncharacterized protein (383 aa).

The protein to V.anguillarum virulence protein VirA.

Could have an enzymatic function. This is an uncharacterized protein from Sinorhizobium fredii (strain NBRC 101917 / NGR234).